Here is a 368-residue protein sequence, read N- to C-terminus: 4-hydroxy-3-methylbut-2-en-1-yl diphosphate synthase (flavodoxin) (368 aa).

[4Fe-4S] cluster contacts are provided by C268, C271, C303, and E310.

This sequence belongs to the IspG family. [4Fe-4S] cluster is required as a cofactor.

It catalyses the reaction (2E)-4-hydroxy-3-methylbut-2-enyl diphosphate + oxidized [flavodoxin] + H2O + 2 H(+) = 2-C-methyl-D-erythritol 2,4-cyclic diphosphate + reduced [flavodoxin]. Its pathway is isoprenoid biosynthesis; isopentenyl diphosphate biosynthesis via DXP pathway; isopentenyl diphosphate from 1-deoxy-D-xylulose 5-phosphate: step 5/6. In terms of biological role, converts 2C-methyl-D-erythritol 2,4-cyclodiphosphate (ME-2,4cPP) into 1-hydroxy-2-methyl-2-(E)-butenyl 4-diphosphate. This is 4-hydroxy-3-methylbut-2-en-1-yl diphosphate synthase (flavodoxin) from Bacillus cytotoxicus (strain DSM 22905 / CIP 110041 / 391-98 / NVH 391-98).